A 650-amino-acid polypeptide reads, in one-letter code: Chaperone protein DnaK (650 aa).

Thr-200 carries the post-translational modification Phosphothreonine; by autocatalysis. The interval Gln-613–Gln-634 is disordered.

It belongs to the heat shock protein 70 family.

Its function is as follows. Acts as a chaperone. The protein is Chaperone protein DnaK of Burkholderia vietnamiensis (strain G4 / LMG 22486) (Burkholderia cepacia (strain R1808)).